We begin with the raw amino-acid sequence, 419 residues long: D-inositol 3-phosphate glycosyltransferase (419 aa).

H9 is a binding site for 1D-myo-inositol 3-phosphate. Residues 15-16 (QP) and G23 each bind UDP-N-acetyl-alpha-D-glucosamine. 1D-myo-inositol 3-phosphate is bound by residues 20–25 (DAGGMN), K78, Y110, T134, and R154. The UDP-N-acetyl-alpha-D-glucosamine site is built by R231, K236, and R295. Mg(2+) contacts are provided by Y304, R305, and A307. 2 residues coordinate UDP-N-acetyl-alpha-D-glucosamine: E317 and E325. T331 lines the Mg(2+) pocket.

Belongs to the glycosyltransferase group 1 family. MshA subfamily. In terms of assembly, homodimer.

It catalyses the reaction 1D-myo-inositol 3-phosphate + UDP-N-acetyl-alpha-D-glucosamine = 1D-myo-inositol 2-acetamido-2-deoxy-alpha-D-glucopyranoside 3-phosphate + UDP + H(+). Catalyzes the transfer of a N-acetyl-glucosamine moiety to 1D-myo-inositol 3-phosphate to produce 1D-myo-inositol 2-acetamido-2-deoxy-glucopyranoside 3-phosphate in the mycothiol biosynthesis pathway. This is D-inositol 3-phosphate glycosyltransferase from Corynebacterium jeikeium (strain K411).